Reading from the N-terminus, the 393-residue chain is S-adenosylmethionine synthase (393 aa).

Residue histidine 17 participates in ATP binding. Position 19 (aspartate 19) interacts with Mg(2+). A K(+)-binding site is contributed by glutamate 45. Residues glutamate 58 and glutamine 106 each coordinate L-methionine. The segment at 106–116 is flexible loop; the sequence is QSAHIAQGVDA. Residues 171-173, 237-238, aspartate 246, 252-253, alanine 269, and lysine 273 contribute to the ATP site; these read DAK, KF, and RK. Position 246 (aspartate 246) interacts with L-methionine. Lysine 277 serves as a coordination point for L-methionine.

It belongs to the AdoMet synthase family. As to quaternary structure, homotetramer; dimer of dimers. The cofactor is Mg(2+). K(+) is required as a cofactor.

The protein localises to the cytoplasm. It catalyses the reaction L-methionine + ATP + H2O = S-adenosyl-L-methionine + phosphate + diphosphate. It functions in the pathway amino-acid biosynthesis; S-adenosyl-L-methionine biosynthesis; S-adenosyl-L-methionine from L-methionine: step 1/1. Functionally, catalyzes the formation of S-adenosylmethionine (AdoMet) from methionine and ATP. The overall synthetic reaction is composed of two sequential steps, AdoMet formation and the subsequent tripolyphosphate hydrolysis which occurs prior to release of AdoMet from the enzyme. This Jannaschia sp. (strain CCS1) protein is S-adenosylmethionine synthase.